Consider the following 288-residue polypeptide: Programmed cell death protein 1 (288 aa).

The first 24 residues, 1 to 24 (MQIPQAPWPVVWAVLQLGWRPGWF), serve as a signal peptide directing secretion. Residues 25–34 (LDSPDRPWNP) are nivolumab binding. Over 25–170 (LDSPDRPWNP…RPAGQFQTLV (146 aa)) the chain is Extracellular. In terms of domain architecture, Ig-like V-type spans 35–145 (PTFSPALLVV…ESLRAELRVT (111 aa)). Residues asparagine 49, asparagine 58, asparagine 74, and asparagine 116 are each glycosylated (N-linked (GlcNAc...) asparagine). Cysteine 54 and cysteine 123 are oxidised to a cystine. The tract at residues 70–77 (MSPSNQTD) is interaction with CD274/PDCD1L1. Positions 74–99 (NQTDKLAAFPEDRSQPGQDCRFRVTQ) are pembrolizumab binding. The helical transmembrane segment at 171–191 (VGVVGGLLGSLVLLVWVLAVI) threads the bilayer. The Cytoplasmic segment spans residues 192–288 (CSRAARGTIG…PEDGHCSWPL (97 aa)). The ITIM motif signature appears at 221-226 (VDYGEL). A Phosphotyrosine modification is found at tyrosine 223. A Glycyl lysine isopeptide (Lys-Gly) (interchain with G-Cter in ubiquitin) cross-link involves residue lysine 233. Residue threonine 234 is modified to Phosphothreonine; by MAPK3. Positions 247–251 (EYATI) match the ITSM motif motif. Tyrosine 248 carries the phosphotyrosine modification. The disordered stretch occupies residues 254 to 288 (PSGMGTSSPARRGSADGPRSAQPLRPEDGHCSWPL). The segment covering 278–288 (RPEDGHCSWPL) has biased composition (basic and acidic residues).

As to quaternary structure, monomer. Interacts with CD274/PDCD1L1. Interacts with CD273/PDCD1LG2. Interacts with FBXO38; leading to ubiquitination and degradation of PDCD1 by the proteasome. Post-translationally, ubiquitinated at Lys-233 by the SCF(FBXO38) complex, leading to its proteasomal degradation. Ubiquitinated via 'Lys-48'-linked polyubiquitin chains. Deubiquitinated and thus stabilized by USP5. In terms of processing, tyrosine phosphorylated at Tyr-223 (within ITIM motif) and Tyr-248 (ITSM motif) upon ligand binding. Phosphorylation at Tyr-248 promotes the recruitment of the protein tyrosine phosphatase PTPN11/SHP-2 that mediates dephosphorylation of key TCR proximal signaling molecules, such as ZAP70, PRKCQ/PKCtheta and CD247/CD3zeta. Phosphorylation at Thr-234 promotes the recruitment of the deubiquitinase USP5. N-glycosylation at Asn-58 contains at least two N-acetylglucosamine units and one fucose. N-glycosylation does not affect binding to nivolumab drug.

It localises to the cell membrane. With respect to regulation, inhibited by pembrolizumab (also named MK-3475 or lambrolizumab), a monoclonal antibody that prevents the interaction with CD274/PDCD1L1. Inhibited by nivolumab (also named ONO-4538, BMS-936558 or Opdivo), a monoclonal antibody that prevents the interaction with CD274/PDCD1L1. The interaction with nivolumab is not dependent on glycosylation and depends on a loop at the N-terminus (N-terminal loop, corresponding to residues 25-34). Targeting the interaction between PDCD1 and CD274/PDCD1L1 with pembrolizumab and nivolumab antibodies has demonstrated great promise as a strategy for controlling and eradicating cancer. Pembrolizumab and nivolumab are used for treatment of patients with advanced melanoma. These antibodies are also effective against other cancers, such as non-small cell lung cancer, renal cell carcinoma, bladder cancer and Hodgkin's lymphoma. Inhibitory receptor on antigen activated T-cells that plays a critical role in induction and maintenance of immune tolerance to self. Delivers inhibitory signals upon binding to ligands CD274/PDCD1L1 and CD273/PDCD1LG2. Following T-cell receptor (TCR) engagement, PDCD1 associates with CD3-TCR in the immunological synapse and directly inhibits T-cell activation. Suppresses T-cell activation through the recruitment of PTPN11/SHP-2: following ligand-binding, PDCD1 is phosphorylated within the ITSM motif, leading to the recruitment of the protein tyrosine phosphatase PTPN11/SHP-2 that mediates dephosphorylation of key TCR proximal signaling molecules, such as ZAP70, PRKCQ/PKCtheta and CD247/CD3zeta. In terms of biological role, the PDCD1-mediated inhibitory pathway is exploited by tumors to attenuate anti-tumor immunity and escape destruction by the immune system, thereby facilitating tumor survival. The interaction with CD274/PDCD1L1 inhibits cytotoxic T lymphocytes (CTLs) effector function. The blockage of the PDCD1-mediated pathway results in the reversal of the exhausted T-cell phenotype and the normalization of the anti-tumor response, providing a rationale for cancer immunotherapy. In Homo sapiens (Human), this protein is Programmed cell death protein 1.